We begin with the raw amino-acid sequence, 189 residues long: dCTP deaminase (189 aa).

Residues 112 to 117 (KSTYAR), 136 to 138 (TLE), Gln-157, Tyr-171, and Gln-181 each bind dCTP. Catalysis depends on Glu-138, which acts as the Proton donor/acceptor.

The protein belongs to the dCTP deaminase family. As to quaternary structure, homotrimer.

It carries out the reaction dCTP + H2O + H(+) = dUTP + NH4(+). Its pathway is pyrimidine metabolism; dUMP biosynthesis; dUMP from dCTP (dUTP route): step 1/2. Functionally, catalyzes the deamination of dCTP to dUTP. In Halorhodospira halophila (strain DSM 244 / SL1) (Ectothiorhodospira halophila (strain DSM 244 / SL1)), this protein is dCTP deaminase.